The chain runs to 307 residues: Elongation factor Ts (307 aa).

The segment at 80 to 83 (TDFV) is involved in Mg(2+) ion dislocation from EF-Tu.

This sequence belongs to the EF-Ts family.

The protein localises to the cytoplasm. Its function is as follows. Associates with the EF-Tu.GDP complex and induces the exchange of GDP to GTP. It remains bound to the aminoacyl-tRNA.EF-Tu.GTP complex up to the GTP hydrolysis stage on the ribosome. The chain is Elongation factor Ts from Methylobacterium nodulans (strain LMG 21967 / CNCM I-2342 / ORS 2060).